Consider the following 906-residue polypeptide: Catenin alpha-1 (906 aa).

N-acetylthreonine is present on threonine 2. The tract at residues 2-228 (TAVHAGNINF…PILYTASQAC (227 aa)) is involved in homodimerization. A Glycyl lysine isopeptide (Lys-Gly) (interchain with G-Cter in SUMO2) cross-link involves residue lysine 57. Residues 97 to 148 (VRKQGDLMKSAAGEFADDPCSSVKRGNMVRAARALLSAVTRLLILADMADVY) are interaction with JUP and CTNNB1. Phosphoserine is present on residues serine 264, serine 295, and serine 297. Residues 325 to 394 (TRDDRRERIV…AVMDHVSDSF (70 aa)) are interaction with alpha-actinin. Threonine 634 is subject to Phosphothreonine. At serine 641 the chain carries Phosphoserine. Phosphothreonine is present on threonine 645. Phosphoserine is present on residues serine 652 and serine 655. Phosphothreonine is present on threonine 658. Residue lysine 797 forms a Glycyl lysine isopeptide (Lys-Gly) (interchain with G-Cter in SUMO2) linkage. Serine 851 is modified (phosphoserine). A compositionally biased stretch (basic and acidic residues) spans 864–880 (PEKKPLVKREKQDETQT). A disordered region spans residues 864 to 894 (PEKKPLVKREKQDETQTKIKRASQKKHVNPV). A compositionally biased stretch (basic residues) spans 881–891 (KIKRASQKKHV).

It belongs to the vinculin/alpha-catenin family. In terms of assembly, monomer and homodimer; the monomer preferentially binds to CTNNB1 and the homodimer to actin. Component of an cadherin:catenin adhesion complex composed of at least of CDH26, beta-catenin/CTNNB1, alpha-catenin/CTNNA1 and p120 catenin/CTNND1. Possible component of an E-cadherin/ catenin adhesion complex together with E-cadherin/CDH1 and beta-catenin/CTNNB1 or gamma-catenin/JUP; the complex is located to adherens junctions. The stable association of CTNNA1 is controversial as CTNNA1 was shown not to bind to F-actin when assembled in the complex. Alternatively, the CTNNA1-containing complex may be linked to F-actin by other proteins such as LIMA1. Binds AFDN and F-actin. Interacts with LIMA1. Interacts with ARHGAP21. Interacts with AJUBA. Interacts with vinculin/VCL. Interacts with TJP2/ZO2 (via N-terminus). Interacts with TJP1/ZO1 (via N-terminus). Post-translationally, sumoylated. In terms of processing, phosphorylation seems to contribute to the strength of cell-cell adhesion rather than to the basic capacity for cell-cell adhesion. In terms of tissue distribution, expressed in cerebellum, heart, liver, small intestine, kidney and placenta (at protein level).

The protein localises to the cytoplasm. It is found in the cytoskeleton. The protein resides in the cell junction. It localises to the adherens junction. Its subcellular location is the cell membrane. The protein localises to the nucleus. Functionally, associates with the cytoplasmic domain of a variety of cadherins. The association of catenins to cadherins produces a complex which is linked to the actin filament network, and which seems to be of primary importance for cadherins cell-adhesion properties. Can associate with both E- and N-cadherins. Originally believed to be a stable component of E-cadherin/catenin adhesion complexes and to mediate the linkage of cadherins to the actin cytoskeleton at adherens junctions. In contrast, cortical actin was found to be much more dynamic than E-cadherin/catenin complexes and CTNNA1 was shown not to bind to F-actin when assembled in the complex suggesting a different linkage between actin and adherens junctions components. The homodimeric form may regulate actin filament assembly and inhibit actin branching by competing with the Arp2/3 complex for binding to actin filaments. Involved in the regulation of WWTR1/TAZ, YAP1 and TGFB1-dependent SMAD2 and SMAD3 nuclear accumulation. May play a crucial role in cell differentiation. The protein is Catenin alpha-1 of Mus musculus (Mouse).